A 561-amino-acid chain; its full sequence is Dihydroxy-acid dehydratase 2 (561 aa).

Cys-53 lines the [2Fe-2S] cluster pocket. Mg(2+) is bound at residue Asp-85. A [2Fe-2S] cluster-binding site is contributed by Cys-126. Residues Asp-127 and Lys-128 each contribute to the Mg(2+) site. At Lys-128 the chain carries N6-carboxylysine. Cys-195 lines the [2Fe-2S] cluster pocket. Glu-446 contributes to the Mg(2+) binding site. The active-site Proton acceptor is the Ser-472.

The protein belongs to the IlvD/Edd family. Homodimer. [2Fe-2S] cluster is required as a cofactor. Mg(2+) serves as cofactor.

It carries out the reaction (2R)-2,3-dihydroxy-3-methylbutanoate = 3-methyl-2-oxobutanoate + H2O. It catalyses the reaction (2R,3R)-2,3-dihydroxy-3-methylpentanoate = (S)-3-methyl-2-oxopentanoate + H2O. It functions in the pathway amino-acid biosynthesis; L-isoleucine biosynthesis; L-isoleucine from 2-oxobutanoate: step 3/4. Its pathway is amino-acid biosynthesis; L-valine biosynthesis; L-valine from pyruvate: step 3/4. Functions in the biosynthesis of branched-chain amino acids. Catalyzes the dehydration of (2R,3R)-2,3-dihydroxy-3-methylpentanoate (2,3-dihydroxy-3-methylvalerate) into 2-oxo-3-methylpentanoate (2-oxo-3-methylvalerate) and of (2R)-2,3-dihydroxy-3-methylbutanoate (2,3-dihydroxyisovalerate) into 2-oxo-3-methylbutanoate (2-oxoisovalerate), the penultimate precursor to L-isoleucine and L-valine, respectively. The polypeptide is Dihydroxy-acid dehydratase 2 (Acinetobacter baylyi (strain ATCC 33305 / BD413 / ADP1)).